A 191-amino-acid polypeptide reads, in one-letter code: Peptidyl-tRNA hydrolase (191 aa).

A tRNA-binding site is contributed by Tyr-17. The active-site Proton acceptor is His-22. Positions 68, 70, and 116 each coordinate tRNA.

The protein belongs to the PTH family. As to quaternary structure, monomer.

Its subcellular location is the cytoplasm. It carries out the reaction an N-acyl-L-alpha-aminoacyl-tRNA + H2O = an N-acyl-L-amino acid + a tRNA + H(+). Functionally, hydrolyzes ribosome-free peptidyl-tRNAs (with 1 or more amino acids incorporated), which drop off the ribosome during protein synthesis, or as a result of ribosome stalling. In terms of biological role, catalyzes the release of premature peptidyl moieties from peptidyl-tRNA molecules trapped in stalled 50S ribosomal subunits, and thus maintains levels of free tRNAs and 50S ribosomes. The sequence is that of Peptidyl-tRNA hydrolase from Mycolicibacterium smegmatis (strain ATCC 700084 / mc(2)155) (Mycobacterium smegmatis).